The following is a 789-amino-acid chain: UPF0313 protein VC_1711 (789 aa).

In terms of domain architecture, Radical SAM core spans 363 to 642 (AYDMIKTSVN…KALLRYHDPA (280 aa)). Residues Cys-377, Cys-381, and Cys-384 each contribute to the [4Fe-4S] cluster site. The interval 669-789 (PEKDSDLVTP…NTQRQPQRAR (121 aa)) is disordered. A compositionally biased stretch (basic residues) spans 683–698 (KSGRHGANRFATKHTH). Polar residues-rich tracts occupy residues 716–726 (RPNSGNKSNQG), 733–763 (PTGS…QRGS), and 778–789 (RGNTQRQPQRAR).

It belongs to the UPF0313 family. [4Fe-4S] cluster serves as cofactor.

This Vibrio cholerae serotype O1 (strain ATCC 39315 / El Tor Inaba N16961) protein is UPF0313 protein VC_1711.